A 262-amino-acid chain; its full sequence is Acyl-[acyl-carrier-protein]--UDP-N-acetylglucosamine O-acyltransferase (262 aa).

It belongs to the transferase hexapeptide repeat family. LpxA subfamily. Homotrimer.

Its subcellular location is the cytoplasm. It carries out the reaction a (3R)-hydroxyacyl-[ACP] + UDP-N-acetyl-alpha-D-glucosamine = a UDP-3-O-[(3R)-3-hydroxyacyl]-N-acetyl-alpha-D-glucosamine + holo-[ACP]. It functions in the pathway glycolipid biosynthesis; lipid IV(A) biosynthesis; lipid IV(A) from (3R)-3-hydroxytetradecanoyl-[acyl-carrier-protein] and UDP-N-acetyl-alpha-D-glucosamine: step 1/6. Involved in the biosynthesis of lipid A, a phosphorylated glycolipid that anchors the lipopolysaccharide to the outer membrane of the cell. The polypeptide is Acyl-[acyl-carrier-protein]--UDP-N-acetylglucosamine O-acyltransferase (Burkholderia mallei (strain NCTC 10247)).